A 413-amino-acid chain; its full sequence is Multifunctional CCA protein (413 aa).

Gly-8 and Arg-11 together coordinate ATP. CTP is bound by residues Gly-8 and Arg-11. Residues Asp-21 and Asp-23 each coordinate Mg(2+). Residues Arg-91, Arg-137, and Arg-140 each contribute to the ATP site. CTP-binding residues include Arg-91, Arg-137, and Arg-140. Residues 228 to 329 (TGIHTLMVLE…VKIFDKADLW (102 aa)) enclose the HD domain.

This sequence belongs to the tRNA nucleotidyltransferase/poly(A) polymerase family. Bacterial CCA-adding enzyme type 1 subfamily. Monomer. Can also form homodimers and oligomers. The cofactor is Mg(2+). Requires Ni(2+) as cofactor.

It catalyses the reaction a tRNA precursor + 2 CTP + ATP = a tRNA with a 3' CCA end + 3 diphosphate. The catalysed reaction is a tRNA with a 3' CCA end + 2 CTP + ATP = a tRNA with a 3' CCACCA end + 3 diphosphate. Its function is as follows. Catalyzes the addition and repair of the essential 3'-terminal CCA sequence in tRNAs without using a nucleic acid template. Adds these three nucleotides in the order of C, C, and A to the tRNA nucleotide-73, using CTP and ATP as substrates and producing inorganic pyrophosphate. tRNA 3'-terminal CCA addition is required both for tRNA processing and repair. Also involved in tRNA surveillance by mediating tandem CCA addition to generate a CCACCA at the 3' terminus of unstable tRNAs. While stable tRNAs receive only 3'-terminal CCA, unstable tRNAs are marked with CCACCA and rapidly degraded. The chain is Multifunctional CCA protein from Shewanella sediminis (strain HAW-EB3).